The chain runs to 618 residues: Cationic amino acid transporter 3 (618 aa).

At 1 to 36 the chain is on the cytoplasmic side; the sequence is MLWQALRRFGQKLVRRRVLELGMGETRLARCLSTLD. A helical membrane pass occupies residues 37–57; the sequence is LVALGVGSTLGAGVYVLAGEV. Residues 58–61 lie on the Extracellular side of the membrane; it reads AKDK. A helical membrane pass occupies residues 62–82; it reads AGPSIVICFLVAALSSVLAGL. Residues 83-107 lie on the Cytoplasmic side of the membrane; it reads CYAEFGARVPGSGSAYLYSYVTVGE. The helical transmembrane segment at 108-128 threads the bilayer; that stretch reads LWAFTTGWNLILSYVIGTASV. Over 129–162 the chain is Extracellular; the sequence is ARAWSSAFDNLIGNHISRTLKGTILLKMPHVLAE. A helical membrane pass occupies residues 163-183; that stretch reads YPDFFALALVLLLTGLLVLGA. The Cytoplasmic segment spans residues 184–191; sequence SKSALVTK. Residues 192-212 form a helical membrane-spanning segment; sequence VFTGMNLLVLSFVIISGFIKG. Topologically, residues 213–244 are extracellular; that stretch reads ELRNWKLTKEDYCLTMSESNGTCSLDSMGSGG. N-linked (GlcNAc...) asparagine glycosylation is present at Asn232. Residues 245-265 form a helical membrane-spanning segment; that stretch reads FMPFGLEGILRGAATCFYAFV. The Cytoplasmic segment spans residues 266–285; the sequence is GFDCIATTGEEAQNPQRSIP. A helical membrane pass occupies residues 286–306; it reads MGIVISMFICFLAYFGVSSAL. Residues 307–335 lie on the Extracellular side of the membrane; the sequence is TLMMPYYKLHPESPLPEAFSYVGWEPARY. A helical transmembrane segment spans residues 336–356; it reads LVAIGSLCALSTSLLGSMFPM. The Cytoplasmic segment spans residues 357–380; sequence PRVMYSMAEDGLLFRVLAKVHSVT. Residues 381-401 traverse the membrane as a helical segment; it reads HIPIVATLVSGVIAAFMAFLF. Residues 402-406 are Extracellular-facing; that stretch reads ELTDL. The helical transmembrane segment at 407–427 threads the bilayer; it reads VDLMSIGTLLAHSLVSICVLI. Topologically, residues 428-474 are cytoplasmic; it reads LRYQPDQEMKSVEEEMELQEETLEAEKLTVQALFCPVNSIPTLLSGR. The chain crosses the membrane as a helical span at residues 475–495; sequence VVYVCSSLLAVLLTVLCLVLT. The Extracellular segment spans residues 496–506; the sequence is WWTTPLRSGDP. A helical membrane pass occupies residues 507 to 527; the sequence is VWVTVVVLILGLILAISGVIW. Residues 528–539 are Cytoplasmic-facing; sequence RQPQNRTPLHFK. A helical membrane pass occupies residues 540–560; the sequence is VPAVPLLPLVSIFVNVYLMMQ. The Extracellular segment spans residues 561–568; that stretch reads MTAGTWAR. The helical transmembrane segment at 569–589 threads the bilayer; sequence FGIWMLIGFAIYFGYGIQHSM. Residues 590 to 618 lie on the Cytoplasmic side of the membrane; that stretch reads KEVKNHQTLPKTRAQTIDLDLTTSCVHSI. Thr605 bears the Phosphothreonine mark. Position 617 is a phosphoserine (Ser617).

This sequence belongs to the amino acid-polyamine-organocation (APC) superfamily. Cationic amino acid transporter (CAT) (TC 2.A.3.3) family. In terms of processing, N-glycosylated. In terms of tissue distribution, expressed in adult brain and in a wide variety of embryonic tissues.

The protein localises to the cell membrane. It catalyses the reaction L-arginine(in) = L-arginine(out). The catalysed reaction is L-lysine(in) = L-lysine(out). The enzyme catalyses L-ornithine(in) = L-ornithine(out). In terms of biological role, uniporter that mediates the uptake of cationic L-amino acids such as L-arginine, L-lysine and L-ornithine. The transport is sodium ions- and pH-independent, moderately trans-stimulated and is mediated by passive diffusion. The protein is Cationic amino acid transporter 3 of Mus musculus (Mouse).